Consider the following 198-residue polypeptide: uncharacterized protein (198 aa).

An N-terminal signal peptide occupies residues 1 to 28; the sequence is MHPTQRKLMKRIILFLSLLFCIACPAIA.

The protein belongs to the fimbrial protein family.

It localises to the fimbrium. In terms of biological role, part of the yadCKLM-htrE-yadVN fimbrial operon. Could contribute to adhesion to various surfaces in specific environmental niches. This is an uncharacterized protein from Escherichia coli (strain K12).